The following is a 348-amino-acid chain: tRNA pseudouridine synthase D (348 aa).

A substrate-binding site is contributed by F27. The Nucleophile role is filled by D80. N129 is a substrate binding site. The 149-residue stretch at 155–303 folds into the TRUD domain; that stretch reads GVPNYFGSQR…VESARRAVLL (149 aa). F329 is a substrate binding site.

Belongs to the pseudouridine synthase TruD family.

The catalysed reaction is uridine(13) in tRNA = pseudouridine(13) in tRNA. Responsible for synthesis of pseudouridine from uracil-13 in transfer RNAs. This chain is tRNA pseudouridine synthase D, found in Pectobacterium carotovorum subsp. carotovorum (strain PC1).